We begin with the raw amino-acid sequence, 296 residues long: Thioredoxin-related transmembrane protein 2 (296 aa).

The signal sequence occupies residues M1–G48. The Extracellular segment spans residues L49–A102. The chain crosses the membrane as a helical span at residues I103 to M125. Positions L114–K269 constitute a Thioredoxin domain. The Cytoplasmic portion of the chain corresponds to T126 to K296. Residues S211, S243, and S288 each carry the phosphoserine modification. A disordered region spans residues K269 to K296. The short motif at K293 to K296 is the Di-lysine motif element.

As to quaternary structure, monomer. Homodimer; disulfide-linked. Occurs in both reduced and oxidized monomeric form. Oxidative conditions increase homodimerization. Interacts with CANX. Interacts with ATP2A2.

The protein localises to the endoplasmic reticulum membrane. It localises to the mitochondrion membrane. Functionally, endoplasmic reticulum and mitochondria-associated protein that probably functions as a regulator of cellular redox state and thereby regulates protein post-translational modification, protein folding and mitochondrial activity. Indirectly regulates neuronal proliferation, migration, and organization in the developing brain. This chain is Thioredoxin-related transmembrane protein 2 (TMX2), found in Macaca fascicularis (Crab-eating macaque).